The primary structure comprises 159 residues: Urease accessory protein UreE (159 aa).

This sequence belongs to the UreE family.

Its subcellular location is the cytoplasm. Functionally, involved in urease metallocenter assembly. Binds nickel. Probably functions as a nickel donor during metallocenter assembly. In Vibrio parahaemolyticus, this protein is Urease accessory protein UreE.